The chain runs to 519 residues: 2-isopropylmalate synthase (519 aa).

A Pyruvate carboxyltransferase domain is found at 5 to 267 (VVIFDTTLRD…STNINYKEIY (263 aa)). Mn(2+)-binding residues include Asp-14, His-202, His-204, and Asn-238. Residues 392–519 (SLKFFSVQSI…LKILKDFKKK (128 aa)) form a regulatory domain region.

This sequence belongs to the alpha-IPM synthase/homocitrate synthase family. LeuA type 1 subfamily. As to quaternary structure, homodimer. The cofactor is Mn(2+).

The protein localises to the cytoplasm. The catalysed reaction is 3-methyl-2-oxobutanoate + acetyl-CoA + H2O = (2S)-2-isopropylmalate + CoA + H(+). It functions in the pathway amino-acid biosynthesis; L-leucine biosynthesis; L-leucine from 3-methyl-2-oxobutanoate: step 1/4. Its function is as follows. Catalyzes the condensation of the acetyl group of acetyl-CoA with 3-methyl-2-oxobutanoate (2-ketoisovalerate) to form 3-carboxy-3-hydroxy-4-methylpentanoate (2-isopropylmalate). This is 2-isopropylmalate synthase from Buchnera aphidicola subsp. Acyrthosiphon pisum (strain APS) (Acyrthosiphon pisum symbiotic bacterium).